A 247-amino-acid chain; its full sequence is UPF0273 protein PF1931 (247 aa).

Residues R3–L247 form the KaiC domain. ATP is bound at residue G30–S37.

It belongs to the UPF0273 family.

This Pyrococcus furiosus (strain ATCC 43587 / DSM 3638 / JCM 8422 / Vc1) protein is UPF0273 protein PF1931.